A 40-amino-acid polypeptide reads, in one-letter code: Photosystem II reaction center protein J (40 aa).

A helical transmembrane segment spans residues 8 to 28; sequence IPLWIVGTVTGILVIGLIGVF.

The protein belongs to the PsbJ family. As to quaternary structure, PSII is composed of 1 copy each of membrane proteins PsbA, PsbB, PsbC, PsbD, PsbE, PsbF, PsbH, PsbI, PsbJ, PsbK, PsbL, PsbM, PsbT, PsbX, PsbY, PsbZ, Psb30/Ycf12, at least 3 peripheral proteins of the oxygen-evolving complex and a large number of cofactors. It forms dimeric complexes.

It is found in the plastid. The protein resides in the chloroplast thylakoid membrane. In terms of biological role, one of the components of the core complex of photosystem II (PSII). PSII is a light-driven water:plastoquinone oxidoreductase that uses light energy to abstract electrons from H(2)O, generating O(2) and a proton gradient subsequently used for ATP formation. It consists of a core antenna complex that captures photons, and an electron transfer chain that converts photonic excitation into a charge separation. The polypeptide is Photosystem II reaction center protein J (Coffea arabica (Arabian coffee)).